The primary structure comprises 488 residues: Alkaline nuclease (488 aa).

The protein belongs to the herpesviridae alkaline nuclease family. As to quaternary structure, interacts with major DNA-binding protein; this interaction increases the nuclease processivity of the alkaline exonuclease.

It is found in the host nucleus. Its subcellular location is the host cytoplasm. Its function is as follows. Plays a role in processing non linear or branched viral DNA intermediates in order to promote the production of mature packaged unit-length linear progeny viral DNA molecules. Exhibits endonuclease and exonuclease activities and accepts both double-stranded and single-stranded DNA as substrate. Exonuclease digestion of DNA is in the 5'-&gt; 3' direction and the products are 5'-monophosphate nucleosides. Additionally, forms a recombinase with the major DNA-binding protein, which displays strand exchange activity. In Homo sapiens (Human), this protein is Alkaline nuclease (U70).